The sequence spans 77 residues: Conotoxin VnMEKL-0223 (77 aa).

A signal peptide spans 1–19; that stretch reads MQKLTILLLVAAVLMSTQA. Positions 20 to 37 are excised as a propeptide; it reads LIKGGGEKRPKEKIKFLS. 3 disulfide bridges follow: Cys-51–Cys-65, Cys-58–Cys-69, and Cys-64–Cys-74.

Belongs to the conotoxin O2 superfamily. As to expression, expressed by the venom duct.

The protein localises to the secreted. The chain is Conotoxin VnMEKL-0223 from Conus ventricosus (Mediterranean cone).